The primary structure comprises 577 residues: 2-hydroxyacyl-CoA lyase (577 aa).

Glutamate 59 contributes to the thiamine diphosphate binding site. Residues 412–493 (TMDVGRAVLV…VIVFNNNGVY (82 aa)) are thiamine pyrophosphate binding. Mg(2+)-binding residues include aspartate 462 and asparagine 489.

It belongs to the TPP enzyme family. In terms of assembly, homotetramer. Requires Mg(2+) as cofactor. Thiamine diphosphate is required as a cofactor.

It carries out the reaction an (R)-2-hydroxy-long-chain-fatty acyl-CoA = a long-chain fatty aldehyde + formyl-CoA. It catalyses the reaction a 2-hydroxy-3-methyl fatty acyl-CoA = a 2-methyl-branched fatty aldehyde + formyl-CoA. Catalyzes a carbon-carbon cleavage reaction; cleaves a 2-hydroxy-3-methylacyl-CoA into formyl-CoA and a 2-methyl-branched fatty aldehyde. The polypeptide is 2-hydroxyacyl-CoA lyase (Oryza sativa subsp. japonica (Rice)).